Reading from the N-terminus, the 341-residue chain is MATIKDVAKRAGVSTTTVSHVINKTRFVADETKAAVWEAIKELHYSPSAVARSLKVNHTKSIGLLATSSEAPYFAEVIESVENSCYGHGYTLILCNSHNNLEKQKAYLAMLAQKRVDGLLVMCSEYPENLLESLEDYRHIPMVVMDWGTRRSDFTDAIQDNAFEGGYLAGRYLIERGHRDIGAITGPVSRNTGGGRLRGFLKALQEASITPLESWLVEGDFEPESGYTAMQNILSQKQRPTAVFVGGDIMAMGAICAADEMGLRVPQDISVIGYDNVRNARYFTPALTTIHQPKERLGAMAFDMLLDRITSKREDAQTIEVHPKLVERRSVADGPFIDYRR.

The region spanning 2-56 (ATIKDVAKRAGVSTTTVSHVINKTRFVADETKAAVWEAIKELHYSPSAVARSLKV) is the HTH lacI-type domain. Residues 4–23 (IKDVAKRAGVSTTTVSHVIN) constitute a DNA-binding region (H-T-H motif). Residues 48–56 (SAVARSLKV) mediate DNA binding. Positions 73, 190, 192, 221, and 275 each coordinate hypoxanthine.

Homodimer.

It functions in the pathway purine metabolism; purine nucleotide biosynthesis [regulation]. Its function is as follows. Is the main repressor of the genes involved in the de novo synthesis of purine nucleotides, regulating purB, purC, purEK, purF, purHD, purL, purMN and guaBA expression. PurR is allosterically activated to bind its cognate DNA by binding the purine corepressors, hypoxanthine or guanine, thereby effecting transcription repression. In Edwardsiella ictaluri (strain 93-146), this protein is HTH-type transcriptional repressor PurR.